We begin with the raw amino-acid sequence, 398 residues long: Histidinol-phosphate aminotransferase (398 aa).

Polar residues predominate over residues 1–10; that stretch reads MTGQRATPQP. The disordered stretch occupies residues 1-30; that stretch reads MTGQRATPQPTLDDLPLRDDLRGKSPYGAP. N6-(pyridoxal phosphate)lysine is present on Lys-234.

The protein belongs to the class-II pyridoxal-phosphate-dependent aminotransferase family. Histidinol-phosphate aminotransferase subfamily. Homodimer. Pyridoxal 5'-phosphate serves as cofactor.

It catalyses the reaction L-histidinol phosphate + 2-oxoglutarate = 3-(imidazol-4-yl)-2-oxopropyl phosphate + L-glutamate. The protein operates within amino-acid biosynthesis; L-histidine biosynthesis; L-histidine from 5-phospho-alpha-D-ribose 1-diphosphate: step 7/9. This chain is Histidinol-phosphate aminotransferase, found in Mycolicibacterium paratuberculosis (strain ATCC BAA-968 / K-10) (Mycobacterium paratuberculosis).